A 64-amino-acid polypeptide reads, in one-letter code: Micrurotoxin 2 (64 aa).

5 cysteine pairs are disulfide-bonded: C3–C24, C6–C11, C17–C41, C45–C57, and C58–C63.

The protein belongs to the three-finger toxin family. Ancestral subfamily. In terms of tissue distribution, expressed by the venom gland.

It is found in the secreted. Functionally, allosteric modulator of the GABA(A) receptor (GABR), possibly increasing receptor affinity for the agonist, thus enhancing receptor opening and macroscopic desensitization. In vivo, intracerebroventricular injection into mice results in periods of reduced basal activity, followed by bursts of intense seizures and death. This chain is Micrurotoxin 2, found in Micrurus mipartitus (Red-tailed coral snake).